Here is a 294-residue protein sequence, read N- to C-terminus: Ribosomal RNA small subunit methyltransferase H (294 aa).

Residues 31–33 (GGY), Asp-49, Phe-76, Asp-97, and Gln-104 each bind S-adenosyl-L-methionine.

Belongs to the methyltransferase superfamily. RsmH family.

The protein localises to the cytoplasm. It carries out the reaction cytidine(1402) in 16S rRNA + S-adenosyl-L-methionine = N(4)-methylcytidine(1402) in 16S rRNA + S-adenosyl-L-homocysteine + H(+). Specifically methylates the N4 position of cytidine in position 1402 (C1402) of 16S rRNA. The polypeptide is Ribosomal RNA small subunit methyltransferase H (Wolbachia pipientis subsp. Culex pipiens (strain wPip)).